The chain runs to 340 residues: Glyceraldehyde-3-phosphate dehydrogenase 2 (340 aa).

NADP(+)-binding positions include 12-13 (RI), Arg78, and Thr120. D-glyceraldehyde 3-phosphate is bound by residues 151–153 (SCT) and Thr182. Cys152 serves as the catalytic Nucleophile. Residue Asn183 participates in NADP(+) binding. D-glyceraldehyde 3-phosphate-binding positions include Arg197, 210–211 (TG), and Arg233. NADP(+) is bound at residue Asn315.

Belongs to the glyceraldehyde-3-phosphate dehydrogenase family. Homotetramer. Interacts with BrxC. In terms of processing, in response to oxidative stress, the active site Cys likely reacts with bacillithiol (BSH) to form mixed disulfides to protect the Cys residue against overoxidation. S-bacillithiolation presumably leads to loss of catalytic activity. Debacillithiolation by monothiol bacilliredoxin BrxC restores the activity.

The protein localises to the cytoplasm. The catalysed reaction is D-glyceraldehyde 3-phosphate + phosphate + NADP(+) = (2R)-3-phospho-glyceroyl phosphate + NADPH + H(+). It catalyses the reaction D-glyceraldehyde 3-phosphate + phosphate + NAD(+) = (2R)-3-phospho-glyceroyl phosphate + NADH + H(+). Its pathway is carbohydrate biosynthesis; gluconeogenesis. Functionally, involved in the gluconeogenesis. Catalyzes the oxidative phosphorylation of glyceraldehyde 3-phosphate (G3P) to 1,3-bisphosphoglycerate (BPG) using the cofactor NADP. The first reaction step involves the formation of a hemiacetal intermediate between G3P and a cysteine residue, and this hemiacetal intermediate is then oxidized to a thioester, with concomitant reduction of NADP to NADPH. The reduced NADPH is then exchanged with the second NADP, and the thioester is attacked by a nucleophilic inorganic phosphate to produce BPG. The polypeptide is Glyceraldehyde-3-phosphate dehydrogenase 2 (Bacillus subtilis (strain 168)).